A 260-amino-acid chain; its full sequence is Resolvase (260 aa).

The region spanning Glu38–Arg241 is the Tyr recombinase domain. Catalysis depends on residues Arg73, Lys105, His193, Arg196, and His219. Residue Tyr228 is the O-(3'-phospho-DNA)-tyrosine intermediate of the active site.

This sequence belongs to the 'phage' integrase family.

In terms of biological role, this resolvase acts at the RfsF equivalent resolution sequence of pColBM-CL139. The chain is Resolvase (resD) from Escherichia coli.